The following is a 399-amino-acid chain: Stearoyl-[acyl-carrier-protein] 9-desaturase, seed specific, chloroplastic (399 aa).

The N-terminal 34 residues, 1–34 (MALKFNPLVSQPYKLASSARPPVSTFRSPKFLCL), are a transit peptide targeting the chloroplast. Fe cation is bound by residues glutamate 141, glutamate 179, histidine 182, glutamate 232, glutamate 265, and histidine 268.

Belongs to the fatty acid desaturase type 2 family. As to quaternary structure, homodimer. The cofactor is Fe(2+). In terms of tissue distribution, developing seeds.

The protein resides in the plastid. It is found in the chloroplast. The catalysed reaction is octadecanoyl-[ACP] + 2 reduced [2Fe-2S]-[ferredoxin] + O2 + 2 H(+) = (9Z)-octadecenoyl-[ACP] + 2 oxidized [2Fe-2S]-[ferredoxin] + 2 H2O. Its pathway is lipid metabolism; fatty acid metabolism. In terms of biological role, converts stearoyl-ACP to oleoyl-ACP by introduction of a cis double bond between carbons Delta(9) and Delta(10) of the acyl chain. This chain is Stearoyl-[acyl-carrier-protein] 9-desaturase, seed specific, chloroplastic, found in Brassica napus (Rape).